Here is a 632-residue protein sequence, read N- to C-terminus: Chaperone protein HtpG (632 aa).

Residues methionine 1–arginine 339 are a; substrate-binding. The tract at residues glutamate 340 to arginine 559 is b. The interval methionine 560–alanine 632 is c.

This sequence belongs to the heat shock protein 90 family. Homodimer.

It localises to the cytoplasm. Its function is as follows. Molecular chaperone. Has ATPase activity. In Burkholderia pseudomallei (strain 1106a), this protein is Chaperone protein HtpG.